Reading from the N-terminus, the 214-residue chain is Pyridoxine/pyridoxamine 5'-phosphate oxidase (214 aa).

Substrate-binding positions include 8–11 and Lys-66; that span reads RINY. FMN contacts are provided by residues 61 to 66, 76 to 77, Arg-82, Lys-83, and Gln-105; these read RIVLIK and FT. The substrate site is built by Tyr-123, Arg-127, and Ser-131. Residues 140–141 and Trp-184 contribute to the FMN site; that span reads QS. 190-192 is a binding site for substrate; it reads RLH. Position 194 (Arg-194) interacts with FMN.

It belongs to the pyridoxamine 5'-phosphate oxidase family. As to quaternary structure, homodimer. The cofactor is FMN.

The enzyme catalyses pyridoxamine 5'-phosphate + O2 + H2O = pyridoxal 5'-phosphate + H2O2 + NH4(+). The catalysed reaction is pyridoxine 5'-phosphate + O2 = pyridoxal 5'-phosphate + H2O2. It participates in cofactor metabolism; pyridoxal 5'-phosphate salvage; pyridoxal 5'-phosphate from pyridoxamine 5'-phosphate: step 1/1. Its pathway is cofactor metabolism; pyridoxal 5'-phosphate salvage; pyridoxal 5'-phosphate from pyridoxine 5'-phosphate: step 1/1. In terms of biological role, catalyzes the oxidation of either pyridoxine 5'-phosphate (PNP) or pyridoxamine 5'-phosphate (PMP) into pyridoxal 5'-phosphate (PLP). This Burkholderia orbicola (strain MC0-3) protein is Pyridoxine/pyridoxamine 5'-phosphate oxidase.